The sequence spans 185 residues: Elongation factor P (185 aa).

The protein belongs to the elongation factor P family.

The protein localises to the cytoplasm. Its pathway is protein biosynthesis; polypeptide chain elongation. In terms of biological role, involved in peptide bond synthesis. Stimulates efficient translation and peptide-bond synthesis on native or reconstituted 70S ribosomes in vitro. Probably functions indirectly by altering the affinity of the ribosome for aminoacyl-tRNA, thus increasing their reactivity as acceptors for peptidyl transferase. This Bordetella bronchiseptica (strain ATCC BAA-588 / NCTC 13252 / RB50) (Alcaligenes bronchisepticus) protein is Elongation factor P.